Consider the following 282-residue polypeptide: NADPH-dependent 7-cyano-7-deazaguanine reductase (282 aa).

Position 88 to 90 (88 to 90 (IES)) interacts with substrate. Residue 90 to 91 (SK) coordinates NADPH. Catalysis depends on Cys190, which acts as the Thioimide intermediate. The Proton donor role is filled by Asp197. 229 to 230 (HE) serves as a coordination point for substrate. NADPH is bound at residue 258 to 259 (RG).

It belongs to the GTP cyclohydrolase I family. QueF type 2 subfamily. As to quaternary structure, homodimer.

Its subcellular location is the cytoplasm. The enzyme catalyses 7-aminomethyl-7-carbaguanine + 2 NADP(+) = 7-cyano-7-deazaguanine + 2 NADPH + 3 H(+). It functions in the pathway tRNA modification; tRNA-queuosine biosynthesis. In terms of biological role, catalyzes the NADPH-dependent reduction of 7-cyano-7-deazaguanine (preQ0) to 7-aminomethyl-7-deazaguanine (preQ1). The protein is NADPH-dependent 7-cyano-7-deazaguanine reductase of Escherichia coli O17:K52:H18 (strain UMN026 / ExPEC).